The chain runs to 424 residues: Enolase (424 aa).

A (2R)-2-phosphoglycerate-binding site is contributed by Q165. E207 serves as the catalytic Proton donor. Residues D244, E283, and D310 each coordinate Mg(2+). The (2R)-2-phosphoglycerate site is built by K335, R364, S365, and K386. The active-site Proton acceptor is K335.

It belongs to the enolase family. Mg(2+) is required as a cofactor.

Its subcellular location is the cytoplasm. It is found in the secreted. It localises to the cell surface. The catalysed reaction is (2R)-2-phosphoglycerate = phosphoenolpyruvate + H2O. The protein operates within carbohydrate degradation; glycolysis; pyruvate from D-glyceraldehyde 3-phosphate: step 4/5. Functionally, catalyzes the reversible conversion of 2-phosphoglycerate (2-PG) into phosphoenolpyruvate (PEP). It is essential for the degradation of carbohydrates via glycolysis. The chain is Enolase from Chlamydia trachomatis serovar D (strain ATCC VR-885 / DSM 19411 / UW-3/Cx).